Here is a 202-residue protein sequence, read N- to C-terminus: Translation initiation factor IF-3 (202 aa).

Belongs to the IF-3 family. As to quaternary structure, monomer.

The protein resides in the cytoplasm. Functionally, IF-3 binds to the 30S ribosomal subunit and shifts the equilibrium between 70S ribosomes and their 50S and 30S subunits in favor of the free subunits, thus enhancing the availability of 30S subunits on which protein synthesis initiation begins. This chain is Translation initiation factor IF-3, found in Prochlorococcus marinus (strain NATL2A).